The following is a 281-amino-acid chain: Small ribosomal subunit protein uS2 (281 aa).

The disordered stretch occupies residues 233-281; it reads NKAEGEAAEQPMAAWEKELLTNEAPAEASAEAAAPAAAEGETAEAPKAE. Over residues 255 to 275 the composition is skewed to low complexity; it reads EAPAEASAEAAAPAAAEGETA.

The protein belongs to the universal ribosomal protein uS2 family.

The sequence is that of Small ribosomal subunit protein uS2 from Bifidobacterium longum (strain DJO10A).